Here is a 175-residue protein sequence, read N- to C-terminus: Peptide deformylase (175 aa).

2 residues coordinate Fe cation: C92 and H134. E135 is an active-site residue. Residue H138 coordinates Fe cation.

Belongs to the polypeptide deformylase family. Requires Fe(2+) as cofactor.

The enzyme catalyses N-terminal N-formyl-L-methionyl-[peptide] + H2O = N-terminal L-methionyl-[peptide] + formate. In terms of biological role, removes the formyl group from the N-terminal Met of newly synthesized proteins. Requires at least a dipeptide for an efficient rate of reaction. N-terminal L-methionine is a prerequisite for activity but the enzyme has broad specificity at other positions. This is Peptide deformylase from Blochmanniella floridana.